We begin with the raw amino-acid sequence, 444 residues long: Trimethylamine monooxygenase (444 aa).

FAD-binding residues include C12, E37, Q39, L45, and W46. NADP(+) is bound by residues W70 and N72. The FAD site is built by N72 and V125. Positions 170, 202, 203, 205, 226, 227, and 288 each coordinate NADP(+). 2 residues coordinate FAD: Q315 and T318. R409 serves as a coordination point for NADP(+).

Belongs to the FMO family. Homodimer. FAD is required as a cofactor.

It catalyses the reaction trimethylamine + NADPH + O2 = trimethylamine N-oxide + NADP(+) + H2O. In terms of biological role, catalyzes the oxidation of trimethylamine (TMA) to produce trimethylamine N-oxide (TMAO). In vitro, has a broad substrate specificity, oxidizing many nitrogen- and sulfur-containing compounds, including dimethylamine (DMA), dimethylsulfide (DMS), dimethylsulfoxide (DMSO) and methimazole. TMA shows the highest affinity. The polypeptide is Trimethylamine monooxygenase (Pelagibacter sp. (strain HTCC7211)).